We begin with the raw amino-acid sequence, 87 residues long: Neurotoxin LmNaTx64.1 (87 aa).

The signal sequence occupies residues 1 to 18 (MKILFLIILTAFFIGVHC). The LCN-type CS-alpha/beta domain occupies 19-85 (KHGYPIIRAG…TWSRATNKCK (67 aa)). Intrachain disulfides connect C33/C84, C37/C58, C44/C65, and C48/C67. C84 is modified (cysteine amide).

This sequence belongs to the long (4 C-C) scorpion toxin superfamily. Sodium channel inhibitor family. Beta subfamily. Expressed by the venom gland.

It is found in the secreted. Its function is as follows. Binds voltage-independently at site-4 of sodium channels (Nav) and shift the voltage of activation toward more negative potentials thereby affecting sodium channel activation and promoting spontaneous and repetitive firing. This Lychas mucronatus (Chinese swimming scorpion) protein is Neurotoxin LmNaTx64.1.